The primary structure comprises 1671 residues: AF4/FMR2 family member lilli (1671 aa).

Disordered regions lie at residues 53 to 79 (YSQN…QQGI), 126 to 304 (SAPG…EKDV), 393 to 599 (LAGE…SNKW), 723 to 761 (DSGT…QLPG), 774 to 1162 (PTQS…TTPH), and 1185 to 1311 (KLTP…LQIG). Over residues 70 to 79 (REKIERQQGI) the composition is skewed to basic and acidic residues. Composition is skewed to low complexity over residues 145–179 (SLGH…QQQQ) and 210–242 (PSSS…SSGG). At Thr416 the chain carries Phosphothreonine. Residues 424–437 (LKTEKNHSLEKQDS) are compositionally biased toward basic and acidic residues. Acidic residues predominate over residues 439–450 (LENDLELSESED). Ser446 and Ser448 each carry phosphoserine. Positions 459–479 (SAGNSSNSSESDSSESGSESS) are enriched in low complexity. The span at 487–496 (HPNHQQHHHQ) shows a compositional bias: basic residues. 2 stretches are compositionally biased toward low complexity: residues 497–522 (LQQQ…PQPL) and 561–587 (PAGV…GSSS). The span at 588–599 (NKTPSPTESNKW) shows a compositional bias: polar residues. The segment covering 723–755 (DSGTSASGSSSSSSSSSDSAVGGEVVPMPGPGE) has biased composition (low complexity). The segment covering 774–786 (PTQSQKAPPSNSV) has biased composition (polar residues). The span at 800–810 (QRQKKPRKKKA) shows a compositional bias: basic residues. A phosphoserine mark is found at Ser819 and Ser820. A DNA-binding region (a.T hook) is located at residues 849–861 (KKGRGRPRKQQQS). Residues 858–896 (QQQSGGSGNLSSASAGSSSQTKGPTLTAAKKPLAKTPLA) show a composition bias toward low complexity. Residues Ser869 and Ser871 each carry the phosphoserine modification. Residues 907–917 (SQSSSNGNTPT) are compositionally biased toward polar residues. Low complexity-rich tracts occupy residues 947–963 (SSSA…SSSS) and 988–1002 (ALLG…SSGS). Residues 1009–1020 (SRSQVGSGQALA) show a composition bias toward polar residues. Low complexity predominate over residues 1032-1058 (SQHSQHLSSSECSSSSGGCTAVCSSSS). The segment covering 1063–1080 (EGRREKERERKPKSDKNK) has biased composition (basic and acidic residues). Over residues 1120-1130 (QPPPPHAPPAA) the composition is skewed to pro residues. The span at 1188 to 1203 (PAQQNGHLTPKDQATN) shows a compositional bias: polar residues. Basic and acidic residues-rich tracts occupy residues 1224–1241 (EHPV…EAKF) and 1250–1280 (FQLK…EQPP). The residue at position 1360 (Ser1360) is a Phosphoserine. A Phosphothreonine modification is found at Thr1362. A compositionally biased stretch (low complexity) spans 1562–1581 (NTPSSISPSNSVGSQGSGSN). A disordered region spans residues 1562–1586 (NTPSSISPSNSVGSQGSGSNTPPGR).

It belongs to the AF4 family.

The protein localises to the nucleus. In terms of biological role, has a role in transcriptional regulation. Acts in parallel with the Ras/MAPK and the PI3K/PKB pathways in the control of cell identity and cellular growth. Essential for regulation of the cytoskeleton and cell growth but not for cell proliferation or growth rate. Required specifically for the microtubule-based basal transport of lipid droplets. Plays a partially redundant function downstream of Raf in cell fate specification in the developing eye. Pair-rule protein that regulates embryonic cellularization, gastrulation and segmentation. This Drosophila yakuba (Fruit fly) protein is AF4/FMR2 family member lilli.